The following is a 512-amino-acid chain: UDP-N-acetylmuramoyl-L-alanyl-D-glutamate--2,6-diaminopimelate ligase (512 aa).

UDP-N-acetyl-alpha-D-muramoyl-L-alanyl-D-glutamate is bound at residue S32. G114–T120 is a binding site for ATP. UDP-N-acetyl-alpha-D-muramoyl-L-alanyl-D-glutamate is bound by residues T156–T157, S183, and R191. An N6-carboxylysine modification is found at K223. Residues R395, D419–R422, G469, and E473 contribute to the meso-2,6-diaminopimelate site. The short motif at D419–R422 is the Meso-diaminopimelate recognition motif element.

The protein belongs to the MurCDEF family. MurE subfamily. The cofactor is Mg(2+). Carboxylation is probably crucial for Mg(2+) binding and, consequently, for the gamma-phosphate positioning of ATP.

The protein resides in the cytoplasm. It carries out the reaction UDP-N-acetyl-alpha-D-muramoyl-L-alanyl-D-glutamate + meso-2,6-diaminopimelate + ATP = UDP-N-acetyl-alpha-D-muramoyl-L-alanyl-gamma-D-glutamyl-meso-2,6-diaminopimelate + ADP + phosphate + H(+). It participates in cell wall biogenesis; peptidoglycan biosynthesis. Catalyzes the addition of meso-diaminopimelic acid to the nucleotide precursor UDP-N-acetylmuramoyl-L-alanyl-D-glutamate (UMAG) in the biosynthesis of bacterial cell-wall peptidoglycan. In Chlorobium phaeobacteroides (strain DSM 266 / SMG 266 / 2430), this protein is UDP-N-acetylmuramoyl-L-alanyl-D-glutamate--2,6-diaminopimelate ligase.